The following is a 94-amino-acid chain: 2S albumin-like cysteine protease inhibitor (94 aa).

3 disulfides stabilise this stretch: cysteine 12/cysteine 35, cysteine 36/cysteine 82, and cysteine 48/cysteine 89.

Belongs to the 2S seed storage albumins family. As to expression, expressed in seeds (at protein level).

In terms of biological role, cysteine protease inhibitor that likely functions in defense against insects by inhibiting cysteine proteases in the midgut of herbivore insects such as C.maculatus. Selectively inhibits cathepsin L, as well as papain, ficin and bromelain with lower efficiency. Shows antitumor activity, inhibiting the growth of prostate cancer cell lines PC3 and DU145, and the gastric cancer cell line Hs746T. No activity against cathepsin B or serine proteases (trypsin, human plasma kallikrein and elastase). In Araucaria angustifolia (Brazilian pine tree), this protein is 2S albumin-like cysteine protease inhibitor.